The primary structure comprises 262 residues: (5R,7aS)-5-hydroxy-7a-methyl-1-oxo-2,3,5,6,7,7a-hexahydro-1H-indene-carboxyl-CoA reductase (262 aa).

D50, D77, V78, N104, Y170, K174, and A203 together coordinate NAD(+). The Proton acceptor role is filled by Y170.

It belongs to the short-chain dehydrogenases/reductases (SDR) family.

The enzyme catalyses (5R,7aS)-5-hydroxy-7a-methyl-1-oxo-2,3,5,6,7,7a-hexahydro-1H-indene-carboxyl-CoA + NAD(+) = (7aS)-7a-methyl-1,5-dioxo-2,3,5,6,7,7a-hexahydro-1H-indene-carboxyl-CoA + NADH + H(+). The protein operates within steroid metabolism; cholesterol degradation. With respect to regulation, requires the presence of IpdC. In terms of biological role, involved in the final steps of cholesterol and steroid degradation. Probably catalyzes the oxidation of the 5-OH group of (5R,7aS)-5-hydroxy-7a-methyl-1-oxo-2,3,5,6,7,7a-hexahydro-1H-indene-carboxyl-CoA, leading to the formation of HIEC-CoA. This chain is (5R,7aS)-5-hydroxy-7a-methyl-1-oxo-2,3,5,6,7,7a-hexahydro-1H-indene-carboxyl-CoA reductase, found in Mycobacterium tuberculosis (strain ATCC 25618 / H37Rv).